Reading from the N-terminus, the 145-residue chain is Large ribosomal subunit protein mL43 (145 aa).

Belongs to the mitochondrion-specific ribosomal protein mL43 family. As to quaternary structure, component of the mitochondrial large ribosomal subunit (mt-LSU). Mature yeast 74S mitochondrial ribosomes consist of a small (37S) and a large (54S) subunit. The 37S small subunit contains a 15S ribosomal RNA (15S mt-rRNA) and at least 32 different proteins. The 54S large subunit contains a 21S rRNA (21S mt-rRNA) and at least 45 different proteins.

It is found in the mitochondrion. In terms of biological role, component of the mitochondrial ribosome (mitoribosome), a dedicated translation machinery responsible for the synthesis of mitochondrial genome-encoded proteins, including at least some of the essential transmembrane subunits of the mitochondrial respiratory chain. The mitoribosomes are attached to the mitochondrial inner membrane and translation products are cotranslationally integrated into the membrane. Also has an extraribosomal function, being essential for mitochondrial genome integrity. May interact with MHR1 to take part in the mtDNA repair mechanism. The protein is Large ribosomal subunit protein mL43 (mrpl51) of Schizosaccharomyces pombe (strain 972 / ATCC 24843) (Fission yeast).